Consider the following 208-residue polypeptide: Small ribosomal subunit protein uS4 (208 aa).

The S4 RNA-binding domain occupies 99-165 (RRLDNVVFQL…PRLKEILSSL (67 aa)).

The protein belongs to the universal ribosomal protein uS4 family. In terms of assembly, part of the 30S ribosomal subunit. Contacts protein S5. The interaction surface between S4 and S5 is involved in control of translational fidelity.

One of the primary rRNA binding proteins, it binds directly to 16S rRNA where it nucleates assembly of the body of the 30S subunit. Functionally, with S5 and S12 plays an important role in translational accuracy. This Desulfitobacterium hafniense (strain DSM 10664 / DCB-2) protein is Small ribosomal subunit protein uS4.